The following is a 379-amino-acid chain: Chaperone protein DnaJ (379 aa).

Residues 5-69 (DYYEVLGISK…NKRATIDQFG (65 aa)) enclose the J domain. Residues 136–218 (GTTKEISIRK…CHGKGTENKT (83 aa)) form a CR-type zinc finger. Zn(2+)-binding residues include Cys-149, Cys-152, Cys-166, Cys-169, Cys-192, Cys-195, Cys-206, and Cys-209. 4 CXXCXGXG motif repeats span residues 149–156 (CETCHGDG), 166–173 (CSYCNGAG), 192–199 (CPKCNGSG), and 206–213 (CPTCHGKG).

It belongs to the DnaJ family. As to quaternary structure, homodimer. Requires Zn(2+) as cofactor.

The protein localises to the cytoplasm. In terms of biological role, participates actively in the response to hyperosmotic and heat shock by preventing the aggregation of stress-denatured proteins and by disaggregating proteins, also in an autonomous, DnaK-independent fashion. Unfolded proteins bind initially to DnaJ; upon interaction with the DnaJ-bound protein, DnaK hydrolyzes its bound ATP, resulting in the formation of a stable complex. GrpE releases ADP from DnaK; ATP binding to DnaK triggers the release of the substrate protein, thus completing the reaction cycle. Several rounds of ATP-dependent interactions between DnaJ, DnaK and GrpE are required for fully efficient folding. Also involved, together with DnaK and GrpE, in the DNA replication of plasmids through activation of initiation proteins. The polypeptide is Chaperone protein DnaJ (Staphylococcus aureus).